Here is a 1358-residue protein sequence, read N- to C-terminus: Xanthine dehydrogenase/oxidase (1358 aa).

The 2Fe-2S ferredoxin-type domain maps to 8 to 95; that stretch reads DELVFFVNGK…HVAVTTVEGI (88 aa). Cys47, Cys52, Cys55, Cys77, Cys117, Cys120, Cys152, and Cys154 together coordinate [2Fe-2S] cluster. In terms of domain architecture, FAD-binding PCMH-type spans 255–440; the sequence is FKGERVMWIQ…LSVEIPYSKE (186 aa). FAD is bound by residues 283–290, Phe363, 373–377, Asp386, Leu430, and Lys448; these read LVVGNTEV and ALGGN. Mo-molybdopterin is bound by residues Gln796 and Phe827. Substrate is bound by residues Glu831 and Arg909. Arg941 contributes to the Mo-molybdopterin binding site. The substrate site is built by Phe943 and Thr1039. Residue Ala1108 coordinates Mo-molybdopterin. The active-site Proton acceptor is the Glu1290.

The protein belongs to the xanthine dehydrogenase family. In terms of assembly, homodimer. FAD serves as cofactor. The cofactor is Mo-molybdopterin. Requires [2Fe-2S] cluster as cofactor. As to expression, detected in liver (at protein level).

The protein resides in the peroxisome. It is found in the cytoplasm. The catalysed reaction is xanthine + NAD(+) + H2O = urate + NADH + H(+). It carries out the reaction hypoxanthine + NAD(+) + H2O = xanthine + NADH + H(+). It catalyses the reaction xanthine + O2 + H2O = urate + H2O2. In terms of biological role, key enzyme in purine degradation. Catalyzes the oxidation of hypoxanthine to xanthine. Catalyzes the oxidation of xanthine to uric acid. Contributes to the generation of reactive oxygen species. The polypeptide is Xanthine dehydrogenase/oxidase (XDH) (Gallus gallus (Chicken)).